Reading from the N-terminus, the 419-residue chain is Putative zinc metalloprotease spr0242 (419 aa).

Histidine 18 serves as a coordination point for Zn(2+). Glutamate 19 is a catalytic residue. Histidine 22 contributes to the Zn(2+) binding site. 3 helical membrane passes run 169 to 191 (LITNFAGPMNNFILGVVVFWVLI), 345 to 367 (ILYFLAMISINIGIFNLIPIPAL), and 388 to 410 (EIETYVTLAGVVIMVVLMIAVTW).

It belongs to the peptidase M50B family. It depends on Zn(2+) as a cofactor.

Its subcellular location is the cell membrane. The chain is Putative zinc metalloprotease spr0242 from Streptococcus pneumoniae (strain ATCC BAA-255 / R6).